The primary structure comprises 769 residues: Glutathione biosynthesis bifunctional protein GshAB (769 aa).

A glutamate--cysteine ligase region spans residues M1–I347. One can recognise an ATP-grasp domain in the interval K514–F768. Residue S541–R599 participates in ATP binding. Mg(2+)-binding residues include D721, E738, and N740. The Mn(2+) site is built by D721, E738, and N740.

In the N-terminal section; belongs to the glutamate--cysteine ligase type 1 family. Type 2 subfamily. Monomer. The cofactor is Mg(2+). It depends on Mn(2+) as a cofactor.

The enzyme catalyses L-cysteine + L-glutamate + ATP = gamma-L-glutamyl-L-cysteine + ADP + phosphate + H(+). It carries out the reaction gamma-L-glutamyl-L-cysteine + glycine + ATP = glutathione + ADP + phosphate + H(+). The protein operates within sulfur metabolism; glutathione biosynthesis; glutathione from L-cysteine and L-glutamate: step 1/2. It participates in sulfur metabolism; glutathione biosynthesis; glutathione from L-cysteine and L-glutamate: step 2/2. Synthesizes glutathione from L-glutamate and L-cysteine via gamma-L-glutamyl-L-cysteine. This Listeria monocytogenes serovar 1/2a (strain ATCC BAA-679 / EGD-e) protein is Glutathione biosynthesis bifunctional protein GshAB.